The sequence spans 137 residues: MSMKTTQEINKEDEELCNESKKFMDVYYDVMDRKREKIGFLYTQVSNAVWNGNPINGYDSICEFMKALPSTQHDIQSLDAQRLPEGVTGDMSGGMLLNVAGAVTVDGDSKRAFTQTLLLGVEDGKYKVKSDRFRYVD.

One can recognise an NTF2 domain in the interval glutamate 19–tyrosine 135.

As to quaternary structure, preferentially binds Ran-GTP.

It localises to the nucleus. Its function is as follows. Stimulator of protein export for NES-containing proteins. Also plays a role in the nuclear export of U1 snRNA, tRNA, and mRNA. The sequence is that of NTF2-related export protein (nxt-1) from Caenorhabditis elegans.